Consider the following 274-residue polypeptide: Proteasome subunit beta (274 aa).

Positions methionine 1–glycine 52 are cleaved as a propeptide — removed in mature form; by autocatalysis. The active-site Nucleophile is the threonine 53.

Belongs to the peptidase T1B family. As to quaternary structure, the 20S proteasome core is composed of 14 alpha and 14 beta subunits that assemble into four stacked heptameric rings, resulting in a barrel-shaped structure. The two inner rings, each composed of seven catalytic beta subunits, are sandwiched by two outer rings, each composed of seven alpha subunits. The catalytic chamber with the active sites is on the inside of the barrel. Has a gated structure, the ends of the cylinder being occluded by the N-termini of the alpha-subunits. Is capped by the proteasome-associated ATPase, ARC.

The protein resides in the cytoplasm. It carries out the reaction Cleavage of peptide bonds with very broad specificity.. It functions in the pathway protein degradation; proteasomal Pup-dependent pathway. Its activity is regulated as follows. The formation of the proteasomal ATPase ARC-20S proteasome complex, likely via the docking of the C-termini of ARC into the intersubunit pockets in the alpha-rings, may trigger opening of the gate for substrate entry. Interconversion between the open-gate and close-gate conformations leads to a dynamic regulation of the 20S proteasome proteolysis activity. Functionally, component of the proteasome core, a large protease complex with broad specificity involved in protein degradation. This Frankia casuarinae (strain DSM 45818 / CECT 9043 / HFP020203 / CcI3) protein is Proteasome subunit beta.